Consider the following 858-residue polypeptide: Elongation factor 2 (858 aa).

The 346-residue stretch at 17-362 folds into the tr-type G domain; that stretch reads ANIRNMSVIA…MITIHLPSPV (346 aa). GTP is bound at residue 26–33; it reads AHVDHGKS. Residue Thr-54 is modified to Phosphothreonine. Thr-57 carries the phosphothreonine; by EEF2K modification. Thr-59 carries the phosphothreonine modification. N6-succinyllysine is present on Lys-152. GTP is bound by residues 158-161 and 216-218; these read NKMD and SGL. Residue Lys-235 is modified to N6-acetyllysine. Lys-239 bears the N6-acetyllysine; alternate mark. Residue Lys-239 forms a Glycyl lysine isopeptide (Lys-Gly) (interchain with G-Cter in SUMO1); alternate linkage. Tyr-265 carries the phosphotyrosine; by CSK modification. At Lys-272 the chain carries N6-acetyllysine; alternate. Position 272 is an N6-succinyllysine; alternate (Lys-272). N6-acetyllysine is present on Lys-275. A Glycyl lysine isopeptide (Lys-Gly) (interchain with G-Cter in SUMO) cross-link involves residue Lys-322. A Phosphoserine modification is found at Ser-325. Tyr-373 bears the Phosphotyrosine; by CSK mark. Position 435 is a phosphothreonine (Thr-435). N6-acetyllysine occurs at positions 439 and 445. Ser-502 is subject to Phosphoserine. Lys-525 carries the N6,N6,N6-trimethyllysine; by EEF2KMT modification. A Glycyl lysine isopeptide (Lys-Gly) (interchain with G-Cter in SUMO) cross-link involves residue Lys-529. Position 572 is an N6-succinyllysine (Lys-572). Ser-595 carries the post-translational modification Phosphoserine; by CDK2. The residue at position 619 (Lys-619) is an N6-acetyllysine. His-715 is subject to Diphthamide.

The protein belongs to the TRAFAC class translation factor GTPase superfamily. Classic translation factor GTPase family. EF-G/EF-2 subfamily. Binds to 80S ribosomes. Actively translating ribosomes show mutually exclusive binding of eIF5a (EIF5A or EIF5A2) and EEF2/eEF2. Interacts with SERBP1; interaction sequesters EEF2/eEF2 at the A-site of the ribosome, thereby blocking the interaction sites of the mRNA-tRNA complex, promoting ribosome stabilization and hibernation. Interacts with HABP4; interaction takes place at the A-site of hibernating ribosomes and promotes ribosome stabilization. Component of the mRNA surveillance SURF complex, at least composed of ERF1, ERF3 (ERF3A or ERF3B), EEF2, UPF1/RENT1, SMG1, SMG8 and SMG9. Interacts with RBPMS2. Post-translationally, phosphorylation by EF-2 kinase completely inactivates EF-2; it requires prior phosphorylation by CDK2 at Ser-595 during mitotic prometaphase. Phosphorylation by CSK promotes SUMOylation, proteolytic cleavage, and nuclear translocation if the C-terminal fragment. In terms of processing, diphthamide is 2-[3-carboxyamido-3-(trimethyl-ammonio)propyl]histidine. ISGylated. Post-translationally, proteolytically processed at two sites following phosphorylation by CSK. In terms of processing, SUMOylated following phosphorylation by CSK, promotes proteolytic cleavage.

It localises to the cytoplasm. It is found in the nucleus. The catalysed reaction is GTP + H2O = GDP + phosphate + H(+). Functionally, catalyzes the GTP-dependent ribosomal translocation step during translation elongation. During this step, the ribosome changes from the pre-translocational (PRE) to the post-translocational (POST) state as the newly formed A-site-bound peptidyl-tRNA and P-site-bound deacylated tRNA move to the P and E sites, respectively. Catalyzes the coordinated movement of the two tRNA molecules, the mRNA and conformational changes in the ribosome. This Pongo abelii (Sumatran orangutan) protein is Elongation factor 2 (EEF2).